Reading from the N-terminus, the 472-residue chain is Glycerol-3-phosphate acyltransferase, chloroplastic (472 aa).

The transit peptide at 1 to 102 (MLVLSSSAPP…EIPVKKEDDN (102 aa)) directs the protein to the chloroplast. Residues 241 to 246 (HQSEAD) carry the HXXXXD motif motif.

Belongs to the GPAT/DAPAT family.

It localises to the plastid. It is found in the chloroplast stroma. It carries out the reaction sn-glycerol 3-phosphate + an acyl-CoA = a 1-acyl-sn-glycero-3-phosphate + CoA. Its pathway is phospholipid metabolism; CDP-diacylglycerol biosynthesis; CDP-diacylglycerol from sn-glycerol 3-phosphate: step 1/3. Functionally, esterifies acyl-group from acyl-ACP to the sn-1 position of glycerol-3-phosphate. The enzyme from chilling-resistant plants discriminates against non-fluid palmitic acid and selects oleic acid whereas the enzyme from sensitive plants accepts both fatty acids. This is an oleate-selective acyltransferase. The sequence is that of Glycerol-3-phosphate acyltransferase, chloroplastic (GAT) from Spinacia oleracea (Spinach).